The following is a 193-amino-acid chain: Guanylate kinase (193 aa).

The Guanylate kinase-like domain occupies 8-188 (GRLVVLVGPS…ACEQLVSLFV (181 aa)). 15–22 (GPSAVGKS) is a binding site for ATP.

The protein belongs to the guanylate kinase family.

Its subcellular location is the cytoplasm. It catalyses the reaction GMP + ATP = GDP + ADP. Its function is as follows. Essential for recycling GMP and indirectly, cGMP. The protein is Guanylate kinase of Nocardia farcinica (strain IFM 10152).